The following is a 248-amino-acid chain: Chitin deacetylase (248 aa).

The signal sequence occupies residues 1-26; that stretch reads MHFSTLFGAAATAALAGSTNASPLAR. 2 disulfide bridges follow: Cys38–Cys237 and Cys148–Cys152. The region spanning 42 to 232 is the NodB homology domain; it reads GLVALTYDDG…TLKSKGYRAV (191 aa). The active-site Proton acceptor is Asp49. Asp49 is a binding site for acetate. 3 residues coordinate Co(2+): Asp50, His104, and His108. Tyr145 is a binding site for acetate. His206 functions as the Proton donor in the catalytic mechanism.

It belongs to the polysaccharide deacetylase family. Monomer. It depends on Co(2+) as a cofactor. N-glycosylated.

It is found in the secreted. It carries out the reaction [(1-&gt;4)-N-acetyl-beta-D-glucosaminyl](n) + n H2O = chitosan + n acetate. Functionally, hydrolyzes the N-acetamido groups of N-acetyl-D-glucosamine polymers in chitin to form chitosan and acetate. May play a role in evasion of the host immune response; plant chitinases liberate chitin molecules from the fungal cell wall which act as elicitors of the plant immune response, deacetylation of the liberated chitin neutralizes elicitor activity. The protein is Chitin deacetylase of Colletotrichum lindemuthianum (Bean anthracnose fungus).